The chain runs to 183 residues: MNKDNLIQNYAVALFNNALLDNIQVKICEEITLLNSIIEDSFEIKKFLFSPLVNKIDKINVFNSLVKTTNFNKIVNNFLLLLIKNSRTHILSNIVEVYNKLLYESRNIKIVHVISTNELQPKEQEWIQSRIEKELQHKTELFFDIDNTIIGGIVIKYDNVLRDYSIKGSLEKIAKCLKNVKIC.

This sequence belongs to the ATPase delta chain family. F-type ATPases have 2 components, F(1) - the catalytic core - and F(0) - the membrane proton channel. F(1) has five subunits: alpha(3), beta(3), gamma(1), delta(1), epsilon(1). F(0) has three main subunits: a(1), b(2) and c(10-14). The alpha and beta chains form an alternating ring which encloses part of the gamma chain. F(1) is attached to F(0) by a central stalk formed by the gamma and epsilon chains, while a peripheral stalk is formed by the delta and b chains.

It is found in the cell inner membrane. Its function is as follows. F(1)F(0) ATP synthase produces ATP from ADP in the presence of a proton or sodium gradient. F-type ATPases consist of two structural domains, F(1) containing the extramembraneous catalytic core and F(0) containing the membrane proton channel, linked together by a central stalk and a peripheral stalk. During catalysis, ATP synthesis in the catalytic domain of F(1) is coupled via a rotary mechanism of the central stalk subunits to proton translocation. In terms of biological role, this protein is part of the stalk that links CF(0) to CF(1). It either transmits conformational changes from CF(0) to CF(1) or is implicated in proton conduction. This is ATP synthase subunit delta from Rickettsia prowazekii (strain Madrid E).